Reading from the N-terminus, the 404-residue chain is MHTKDIKKIVLAYSGGLDTSAIIPWLKEHYGNCEVVAFVADVGQSREDLEGVEQKALRSGASECHVVDLREEFIKDYVYPVLKTGALYEGSYLLGTSMARPIIAKAQVELALKVGADALAHGATGKGNDQVRFESTYTALAPQLKVVAPWREWDLRSREALLDYLKARDIPTTATLEKIYSRDENAWHISTEGGVLESTWNASNKDCWVWTVDPEEAPDEAELVSVMIEKGEVVGVNGKVMSPYQCLEALNILGVKHGIGRIDIVENRLVGMKSRGCYETPGGTIMMAALRGVEQLVLDRDSFKWRQQLGLEMSYVVYDGRWFAPLRRSIQAAAETLAADVSGEVVLKLYKGQVTAIQKRSTNSLYSEAFATFGEDEVYDHSHAAGFIRLYSLPSRIRALNSKE.

ATP contacts are provided by residues 12-20 (AYSGGLDTS) and Ala-40. The L-citrulline site is built by Tyr-92 and Ser-97. Gly-122 provides a ligand contact to ATP. Residues Thr-124, Asn-128, and Asp-129 each coordinate L-aspartate. Residue Asn-128 coordinates L-citrulline. Residues Arg-132, Ser-181, Ser-190, Glu-266, and Tyr-278 each contribute to the L-citrulline site.

It belongs to the argininosuccinate synthase family. Type 1 subfamily. In terms of assembly, homotetramer.

Its subcellular location is the cytoplasm. It carries out the reaction L-citrulline + L-aspartate + ATP = 2-(N(omega)-L-arginino)succinate + AMP + diphosphate + H(+). Its pathway is amino-acid biosynthesis; L-arginine biosynthesis; L-arginine from L-ornithine and carbamoyl phosphate: step 2/3. This chain is Argininosuccinate synthase, found in Photorhabdus laumondii subsp. laumondii (strain DSM 15139 / CIP 105565 / TT01) (Photorhabdus luminescens subsp. laumondii).